We begin with the raw amino-acid sequence, 227 residues long: PKHD-type hydroxylase GDI1238/Gdia_1949 (227 aa).

A Fe2OG dioxygenase domain is found at 78–178 (RVVPPLFNRY…RLASFFWTQS (101 aa)). The Fe cation site is built by histidine 96, aspartate 98, and histidine 159. Arginine 169 is a binding site for 2-oxoglutarate.

Fe(2+) is required as a cofactor. The cofactor is L-ascorbate.

The protein is PKHD-type hydroxylase GDI1238/Gdia_1949 of Gluconacetobacter diazotrophicus (strain ATCC 49037 / DSM 5601 / CCUG 37298 / CIP 103539 / LMG 7603 / PAl5).